The sequence spans 212 residues: Adenylate kinase (212 aa).

ATP is bound at residue 10 to 15 (GAGKGT). Positions 30-59 (STGDMFRAAMANQTEMGVLAKSYIDKGELV) are NMP. Residues T31, R36, 57–59 (ELV), 86–89 (GYPR), and Q93 each bind AMP. The LID stretch occupies residues 127-159 (GRIIHRQTGETFHKVFNPPANYNEEDYYQREDD). Residues R128 and 137-138 (TF) contribute to the ATP site. The AMP site is built by R156 and R167. Residue Q195 participates in ATP binding.

It belongs to the adenylate kinase family. As to quaternary structure, monomer.

The protein localises to the cytoplasm. The enzyme catalyses AMP + ATP = 2 ADP. The protein operates within purine metabolism; AMP biosynthesis via salvage pathway; AMP from ADP: step 1/1. In terms of biological role, catalyzes the reversible transfer of the terminal phosphate group between ATP and AMP. Plays an important role in cellular energy homeostasis and in adenine nucleotide metabolism. In Streptococcus gordonii (strain Challis / ATCC 35105 / BCRC 15272 / CH1 / DL1 / V288), this protein is Adenylate kinase.